A 108-amino-acid chain; its full sequence is Phosphoribosyl-AMP cyclohydrolase (108 aa).

Asp72 provides a ligand contact to Mg(2+). Cys73 is a binding site for Zn(2+). Residues Asp74 and Asp76 each contribute to the Mg(2+) site. Residues Cys89 and Cys96 each coordinate Zn(2+).

Belongs to the PRA-CH family. In terms of assembly, homodimer. It depends on Mg(2+) as a cofactor. The cofactor is Zn(2+).

The protein localises to the cytoplasm. The catalysed reaction is 1-(5-phospho-beta-D-ribosyl)-5'-AMP + H2O = 1-(5-phospho-beta-D-ribosyl)-5-[(5-phospho-beta-D-ribosylamino)methylideneamino]imidazole-4-carboxamide. It functions in the pathway amino-acid biosynthesis; L-histidine biosynthesis; L-histidine from 5-phospho-alpha-D-ribose 1-diphosphate: step 3/9. Functionally, catalyzes the hydrolysis of the adenine ring of phosphoribosyl-AMP. The polypeptide is Phosphoribosyl-AMP cyclohydrolase (Archaeoglobus fulgidus (strain ATCC 49558 / DSM 4304 / JCM 9628 / NBRC 100126 / VC-16)).